The primary structure comprises 102 residues: Integration host factor subunit alpha (102 aa).

Belongs to the bacterial histone-like protein family. In terms of assembly, heterodimer of an alpha and a beta chain.

In terms of biological role, this protein is one of the two subunits of integration host factor, a specific DNA-binding protein that functions in genetic recombination as well as in transcriptional and translational control. This Buchnera aphidicola subsp. Acyrthosiphon pisum (strain 5A) protein is Integration host factor subunit alpha.